A 271-amino-acid chain; its full sequence is 2-dehydro-3-deoxyphosphooctonate aldolase (271 aa).

The protein belongs to the KdsA family.

The protein resides in the cytoplasm. The enzyme catalyses D-arabinose 5-phosphate + phosphoenolpyruvate + H2O = 3-deoxy-alpha-D-manno-2-octulosonate-8-phosphate + phosphate. It functions in the pathway carbohydrate biosynthesis; 3-deoxy-D-manno-octulosonate biosynthesis; 3-deoxy-D-manno-octulosonate from D-ribulose 5-phosphate: step 2/3. Its pathway is bacterial outer membrane biogenesis; lipopolysaccharide biosynthesis. This Campylobacter jejuni subsp. jejuni serotype O:2 (strain ATCC 700819 / NCTC 11168) protein is 2-dehydro-3-deoxyphosphooctonate aldolase.